Consider the following 278-residue polypeptide: Large ribosomal subunit protein uL2 (278 aa).

Disordered stretches follow at residues 28–58 (TPEK…GGGH) and 223–278 (GVVM…KNKR). A compositionally biased stretch (polar residues) spans 43-53 (RNNQGRITTRH). Residues 268-278 (IRRRKTGKNKR) show a composition bias toward basic residues.

Belongs to the universal ribosomal protein uL2 family. Part of the 50S ribosomal subunit. Forms a bridge to the 30S subunit in the 70S ribosome.

Functionally, one of the primary rRNA binding proteins. Required for association of the 30S and 50S subunits to form the 70S ribosome, for tRNA binding and peptide bond formation. It has been suggested to have peptidyltransferase activity; this is somewhat controversial. Makes several contacts with the 16S rRNA in the 70S ribosome. The polypeptide is Large ribosomal subunit protein uL2 (Nocardioides sp. (strain ATCC BAA-499 / JS614)).